The sequence spans 251 residues: Cytochrome c oxidase subunit 2 (251 aa).

The signal sequence occupies residues 1-15 (MLNLLYNQIFNVILN). The Mitochondrial intermembrane portion of the chain corresponds to 16–41 (DVPTPYNTYFQDSATPNQEGILELHD). The helical transmembrane segment at 42–62 (NIMFYLLVILGLVSWLLFTIT) threads the bilayer. At 63–82 (RTYSKNPIAYKYIKHGQTIE) the chain is on the mitochondrial matrix side. A helical transmembrane segment spans residues 83-103 (IIWTIFPAVILLIIAFPSFIL). The Mitochondrial intermembrane portion of the chain corresponds to 104 to 251 (LYLCDEVISP…PAFLEWLNEQ (148 aa)). Positions 186, 221, 223, 225, 229, and 232 each coordinate Cu cation. Residue Glu-223 participates in Mg(2+) binding.

The protein belongs to the cytochrome c oxidase subunit 2 family. Component of the cytochrome c oxidase (complex IV, CIV), a multisubunit enzyme composed of a catalytic core of 3 subunits and several supernumerary subunits. The complex exists as a monomer or a dimer and forms supercomplexes (SCs) in the inner mitochondrial membrane with ubiquinol-cytochrome c oxidoreductase (cytochrome b-c1 complex, complex III, CIII). Cu cation serves as cofactor. In terms of processing, the signal sequence of COX2 is processed by IMP1.

It localises to the mitochondrion inner membrane. The enzyme catalyses 4 Fe(II)-[cytochrome c] + O2 + 8 H(+)(in) = 4 Fe(III)-[cytochrome c] + 2 H2O + 4 H(+)(out). Its function is as follows. Component of the cytochrome c oxidase, the last enzyme in the mitochondrial electron transport chain which drives oxidative phosphorylation. The respiratory chain contains 3 multisubunit complexes succinate dehydrogenase (complex II, CII), ubiquinol-cytochrome c oxidoreductase (cytochrome b-c1 complex, complex III, CIII) and cytochrome c oxidase (complex IV, CIV), that cooperate to transfer electrons derived from NADH and succinate to molecular oxygen, creating an electrochemical gradient over the inner membrane that drives transmembrane transport and the ATP synthase. Cytochrome c oxidase is the component of the respiratory chain that catalyzes the reduction of oxygen to water. Electrons originating from reduced cytochrome c in the intermembrane space (IMS) are transferred via the dinuclear copper A center (CU(A)) of subunit 2 and heme A of subunit 1 to the active site in subunit 1, a binuclear center (BNC) formed by heme A3 and copper B (CU(B)). The BNC reduces molecular oxygen to 2 water molecules using 4 electrons from cytochrome c in the IMS and 4 protons from the mitochondrial matrix. This Lachancea thermotolerans (strain ATCC 56472 / CBS 6340 / NRRL Y-8284) (Yeast) protein is Cytochrome c oxidase subunit 2 (COX2).